The following is a 106-amino-acid chain: uncharacterized protein (106 aa).

The protein resides in the mitochondrion. This is an uncharacterized protein from Arabidopsis thaliana (Mouse-ear cress).